Consider the following 410-residue polypeptide: LL-diaminopimelate aminotransferase (410 aa).

Positions 15 and 42 each coordinate substrate. Pyridoxal 5'-phosphate-binding positions include Tyr72, 108–109 (AK), Tyr132, Asn188, Tyr219, and 247–249 (SFS). Residues Lys109, Tyr132, and Asn188 each contribute to the substrate site. Residue Lys250 is modified to N6-(pyridoxal phosphate)lysine. 2 residues coordinate pyridoxal 5'-phosphate: Arg258 and Asn293. Residues Asn293 and Arg389 each contribute to the substrate site.

The protein belongs to the class-I pyridoxal-phosphate-dependent aminotransferase family. LL-diaminopimelate aminotransferase subfamily. As to quaternary structure, homodimer. Pyridoxal 5'-phosphate is required as a cofactor.

The enzyme catalyses (2S,6S)-2,6-diaminopimelate + 2-oxoglutarate = (S)-2,3,4,5-tetrahydrodipicolinate + L-glutamate + H2O + H(+). It functions in the pathway amino-acid biosynthesis; L-lysine biosynthesis via DAP pathway; LL-2,6-diaminopimelate from (S)-tetrahydrodipicolinate (aminotransferase route): step 1/1. Involved in the synthesis of meso-diaminopimelate (m-DAP or DL-DAP), required for both lysine and peptidoglycan biosynthesis. Catalyzes the direct conversion of tetrahydrodipicolinate to LL-diaminopimelate. This chain is LL-diaminopimelate aminotransferase, found in Bacteroides thetaiotaomicron (strain ATCC 29148 / DSM 2079 / JCM 5827 / CCUG 10774 / NCTC 10582 / VPI-5482 / E50).